Consider the following 195-residue polypeptide: Probable molybdenum cofactor guanylyltransferase (195 aa).

Residues L9–G11, K21, D69, and D100 contribute to the GTP site. D100 serves as a coordination point for Mg(2+).

It belongs to the MobA family. Requires Mg(2+) as cofactor.

It localises to the cytoplasm. It carries out the reaction Mo-molybdopterin + GTP + H(+) = Mo-molybdopterin guanine dinucleotide + diphosphate. Transfers a GMP moiety from GTP to Mo-molybdopterin (Mo-MPT) cofactor (Moco or molybdenum cofactor) to form Mo-molybdopterin guanine dinucleotide (Mo-MGD) cofactor. The protein is Probable molybdenum cofactor guanylyltransferase of Geobacillus sp. (strain WCH70).